We begin with the raw amino-acid sequence, 482 residues long: Immune evasion protein OPG047 (482 aa).

One can recognise a BTB domain in the interval 20–90; sequence KKFKTIIEAI…SYTGKVYIDS (71 aa). A BACK domain is found at 125-222; sequence CIECYMMGIE…SNYLSPRGIH (98 aa). 5 Kelch repeats span residues 273-319, 320-363, 365-408, 410-447, and 448-482; these read VVYL…PANN, KLYV…SINN, IYVM…VFGR, LFLV…IVDN, and KLLL…GMEW.

This sequence belongs to the orthopoxvirus OPG047 family.

In terms of biological role, might have a role in the suppression of host immune response. The sequence is that of Immune evasion protein OPG047 (OPG047) from Cynomys gunnisoni (Gunnison's prairie dog).